A 438-amino-acid polypeptide reads, in one-letter code: GTPase Der (438 aa).

EngA-type G domains follow at residues 4 to 169 (PVVA…PEKG) and 178 to 353 (IDVA…DQNS). GTP-binding positions include 10-17 (GRPNVGKS), 57-61 (DTGGI), 120-123 (NKVD), 184-191 (GKPNVGKS), 231-235 (DTAGL), and 296-299 (NKWD). Residues 354–438 (RRVKTGLLNE…PIRLKFKQKT (85 aa)) form the KH-like domain.

This sequence belongs to the TRAFAC class TrmE-Era-EngA-EngB-Septin-like GTPase superfamily. EngA (Der) GTPase family. In terms of assembly, associates with the 50S ribosomal subunit.

In terms of biological role, GTPase that plays an essential role in the late steps of ribosome biogenesis. This chain is GTPase Der, found in Halothermothrix orenii (strain H 168 / OCM 544 / DSM 9562).